The chain runs to 320 residues: uncharacterized protein (320 aa).

Residue Arg61 is modified to Omega-N-methylarginine. Residues 299 to 320 (LHLQHQKQTSKDAGRQTPERKA) are disordered. Over residues 307–320 (TSKDAGRQTPERKA) the composition is skewed to basic and acidic residues. At Thr315 the chain carries Phosphothreonine.

This is an uncharacterized protein from Mus musculus (Mouse).